We begin with the raw amino-acid sequence, 589 residues long: Parathyroid hormone/parathyroid hormone-related peptide receptor (589 aa).

The signal sequence occupies residues 1-28; sequence MGAARIAPGLALLLCCPVLSSAYALVDA. Over 29–188 the chain is Extracellular; it reads DDVMTKEEQI…REREVFDRLG (160 aa). Intrachain disulfides connect Cys-48–Cys-117, Cys-108–Cys-148, and Cys-131–Cys-170. Positions 64 to 105 are disordered; sequence ESDKGWASASTSGKPKKEKPSGKLHPESEEDKEVPTGSRPRG. Residues 81–90 are compositionally biased toward basic and acidic residues; the sequence is EKPSGKLHPE. N-linked (GlcNAc...) asparagine glycosylation is found at Asn-151, Asn-161, Asn-166, and Asn-176. Residues 189–209 form a helical membrane-spanning segment; sequence MIYTVGYSVSLASLTVAVLIL. Residues 210 to 223 lie on the Cytoplasmic side of the membrane; that stretch reads AYFRRLHCTRNYIH. The chain crosses the membrane as a helical span at residues 224–244; the sequence is MHLFLSFMLRAVSIFVKDAVL. At 245–294 the chain is on the extracellular side; that stretch reads YSGTALDEAERLTEEELRAIAQAPPPPAAAAGYVGCRVAVTFFLYFLATN. Residues 295–315 form a helical membrane-spanning segment; the sequence is YYWILVEGLYLHSLIFMAFFS. Topologically, residues 316–318 are cytoplasmic; the sequence is EKK. The chain crosses the membrane as a helical span at residues 319–339; the sequence is YLWGFTVFGWGLPAIFVAVWV. The Extracellular portion of the chain corresponds to 340–360; it reads SVRATLANTGCWDLSSGNKKW. Residues 361 to 381 form a helical membrane-spanning segment; sequence IIQVPILASIVLNFILFINIV. At 382–404 the chain is on the cytoplasmic side; sequence RVLATKLRETNAGRCDTRQQYRK. A helical transmembrane segment spans residues 405–425; it reads LLKSTLVLMPLFGVHYIVFMA. Residues 426–439 are Extracellular-facing; sequence TPYTEVSGTLWQVQ. The helical transmembrane segment at 440 to 460 threads the bilayer; the sequence is MHYEMLFNSFQGFFVAIIYCF. The Cytoplasmic portion of the chain corresponds to 461–589; the sequence is CNGEVQAEIK…LLQEEWETVM (129 aa). Residues 473-476 carry the Important for interaction with G proteins motif; it reads WSRW. Residues 524–549 form a disordered region; the sequence is AATTNGHPPLPGHTKSGSPALQATPP. Position 547 is a phosphothreonine (Thr-547).

The protein belongs to the G-protein coupled receptor 2 family. In terms of assembly, homodimer in the absence of bound ligand. Peptide hormone binding leads to dissociation of the homodimer. Post-translationally, N-glycosylated.

The protein localises to the cell membrane. In terms of biological role, G-protein-coupled receptor for parathyroid hormone (PTH) and for parathyroid hormone-related peptide (PTHLH). Ligand binding causes a conformation change that triggers signaling via guanine nucleotide-binding proteins (G proteins) and modulates the activity of downstream effectors, such as adenylate cyclase (cAMP). PTH1R is coupled to G(s) G alpha proteins and mediates activation of adenylate cyclase activity. PTHLH dissociates from PTH1R more rapidly than PTH; as consequence, the cAMP response induced by PTHLH decays faster than the response induced by PTH. This is Parathyroid hormone/parathyroid hormone-related peptide receptor (PTH1R) from Bos taurus (Bovine).